A 689-amino-acid polypeptide reads, in one-letter code: MAQVEKRGGLLRKSSASKKPLKEKVVLMYDEIFMTEDPSKCSPRFWEELFLMKVNLEYLEGKLESLDGEELMKIKDNINCLFQHCIQALGEEHPIRVVNALQTLCALIRGVHQKNKSTSGFDIINMLMGFDKAELCMKNLMESLDSLLCAEGSESLKSLCLKLLLCLVTVTDNISQNTILEYVMINSIFEAILQILSHPPSRREHGYDAVVLLALLVNYRKYESVNPYIVKLSIVDDEATLNGMGLVIAQALSEYNRQYKDKEEEHQSGFFSALTNMVGSMFIADAHEKISVQTNEAILLALYEAVHLNRNFITVLAQSHPEMGLVTTPVSPAPTTPVTPLGTTPPSSDVISSVELPLDADVQTSNLLITFLKYSSIVMQDTKDEHRLHSGKLCLIILTCIAEDQYANAFLHDDNMNFRVNLHRMPMRHRKKAADKNLPCRPLVCAVLDLMVEFIVTHMMKEFPMDLYIRCIQVVHKLLCYQKKCRVRLHYTWRELWSALINLLKFLMSNETVLLAKHNIFTLALMIVNLFNMFITYGDTFLPTPSSYDELYYEIIRMHQSFDNLYSMVLRLSTNAGQWKEAASKVTHALVNIRAIINHFNPKIESYAAVNHISQLSEEQVLEVVRANYDTLTLKLQDGLDQYERYSEQHKEAAFFKELVRSISTNVRRNLAFHTLSQEVLLKEFSTIS.

The chain crosses the membrane as a helical span at residues 520-538; that stretch reads IFTLALMIVNLFNMFITYG.

Belongs to the ARMH3 family. In terms of assembly, interacts with PI4KB. Interacts with GBF1.

The protein resides in the golgi apparatus membrane. It localises to the cytoplasm. In terms of biological role, involved in GBF1 recruitment, Golgi maintenance and protein secretion. This chain is Armadillo-like helical domain-containing protein 3, found in Homo sapiens (Human).